A 299-amino-acid polypeptide reads, in one-letter code: N-acetylaspartate synthetase (299 aa).

Pro residues predominate over residues 44 to 57 (AAPGPAAAPPPAAG). Residues 44–70 (AAPGPAAAPPPAAGPQPHGGTGGAGPP) form a disordered region. Over residues 60–70 (PHGGTGGAGPP) the composition is skewed to gly residues. The helical transmembrane segment at 118–138 (YALLAALCFAVTRSLLLTCLV) threads the bilayer. One can recognise an N-acetyltransferase domain in the interval 143–280 (LALRYYYSRK…VLPGMTLSLA (138 aa)).

The protein belongs to the NAT8 family. As to expression, expressed in brain, including in mesencephalic dopaminergic neurons of the substantia nigra and ventral tegmental area and oligodendrocytes. Expressed in cortical pyramidal neurons and granule cells of the hippocampus (at protein level).

It localises to the cytoplasm. The protein resides in the microsome membrane. The protein localises to the mitochondrion membrane. Its subcellular location is the endoplasmic reticulum membrane. The enzyme catalyses L-aspartate + acetyl-CoA = N-acetyl-L-aspartate + CoA + H(+). With respect to regulation, aminooxyacetic acid (AOAA) blocks its activity in both cytoplasm and mitochondria. Its function is as follows. Catalyzes the synthesis of N-acetylaspartate acid (NAA) from L-aspartate and acetyl-CoA. Promotes dopamine uptake by regulating TNF-alpha expression. Attenuates methamphetamine-induced inhibition of dopamine uptake. The sequence is that of N-acetylaspartate synthetase (Nat8l) from Rattus norvegicus (Rat).